The following is a 698-amino-acid chain: Protein artemis (698 aa).

Threonine 380 carries the phosphothreonine modification. Residue serine 385 is modified to Phosphoserine. 3 disordered regions span residues 445-485 (ANFV…DPDV), 505-595 (LENL…DSIS), and 620-669 (NGVP…LPKP). A compositionally biased stretch (acidic residues) spans 449–461 (DCDESNSDSEGEL). Over residues 508 to 521 (LPSSIETGGSQSPK) the composition is skewed to polar residues. A compositionally biased stretch (low complexity) spans 538-551 (THISSQNSSQSTHI). Residues 552–583 (TDQGSQGWDSQCDTVLLSSQEKSGGDSTSLNK) are compositionally biased toward polar residues. Residues 641–655 (TSLTSTQADSQSSSD) show a composition bias toward low complexity. At serine 650 the chain carries Phosphoserine; by ATM.

The protein belongs to the DNA repair metallo-beta-lactamase (DRMBL) family. Interacts with LIG4; the interaction is direct. Interacts with ATM. Interacts with BRCA1. Interacts with PRKDC. Interacts with TP53BP1. Also exhibits ATM- and phosphorylation-dependent interaction with the MRN complex, composed of MRE11, RAD50, and NBN. Post-translationally, phosphorylation on undefined residues by PRKDC may stimulate endonucleolytic activity on 5' and 3' hairpins and overhangs. PRKDC must remain present, even after phosphorylation, for efficient hairpin opening. Also phosphorylated by ATM in response to ionizing radiation (IR) and by ATR in response to ultraviolet (UV) radiation.

The protein localises to the nucleus. Functionally, required for V(D)J recombination, the process by which exons encoding the antigen-binding domains of immunoglobulins and T-cell receptor proteins are assembled from individual V, (D), and J gene segments. V(D)J recombination is initiated by the lymphoid specific RAG endonuclease complex, which generates site specific DNA double strand breaks (DSBs). These DSBs present two types of DNA end structures: hairpin sealed coding ends and phosphorylated blunt signal ends. These ends are independently repaired by the non homologous end joining (NHEJ) pathway to form coding and signal joints respectively. This protein exhibits single-strand specific 5'-3' exonuclease activity in isolation, and acquires endonucleolytic activity on 5' and 3' hairpins and overhangs when in a complex with PRKDC. The latter activity is required specifically for the resolution of closed hairpins prior to the formation of the coding joint. May also be required for the repair of complex DSBs induced by ionizing radiation, which require substantial end-processing prior to religation by NHEJ. The polypeptide is Protein artemis (Dclre1c) (Rattus norvegicus (Rat)).